Here is a 185-residue protein sequence, read N- to C-terminus: Ribosome maturation factor RimM (185 aa).

Residues 103-177 (SEEYYWYEIL…SIIVKKIEWY (75 aa)) form the PRC barrel domain.

The protein belongs to the RimM family. As to quaternary structure, binds ribosomal protein uS19.

It is found in the cytoplasm. An accessory protein needed during the final step in the assembly of 30S ribosomal subunit, possibly for assembly of the head region. Essential for efficient processing of 16S rRNA. May be needed both before and after RbfA during the maturation of 16S rRNA. It has affinity for free ribosomal 30S subunits but not for 70S ribosomes. In Petrotoga mobilis (strain DSM 10674 / SJ95), this protein is Ribosome maturation factor RimM.